The primary structure comprises 215 residues: LexA repressor (215 aa).

Positions 28-48 (RAEIAAELGFSSPNAAEEHLR) form a DNA-binding region, H-T-H motif. Active-site for autocatalytic cleavage activity residues include Ser-133 and Lys-170.

Belongs to the peptidase S24 family. Homodimer.

It catalyses the reaction Hydrolysis of Ala-|-Gly bond in repressor LexA.. Its function is as follows. Represses a number of genes involved in the response to DNA damage (SOS response), including recA and lexA. In the presence of single-stranded DNA, RecA interacts with LexA causing an autocatalytic cleavage which disrupts the DNA-binding part of LexA, leading to derepression of the SOS regulon and eventually DNA repair. The protein is LexA repressor of Burkholderia mallei (strain NCTC 10247).